A 1307-amino-acid polypeptide reads, in one-letter code: Rho1 guanine nucleotide exchange factor TUS1 (1307 aa).

The segment covering 1 to 10 (MYRYNRSSPF) has biased composition (polar residues). Disordered regions lie at residues 1–144 (MYRY…FIGN), 164–194 (PFAN…SDLR), and 219–239 (EDSE…NVSG). Residues 12 to 29 (RTPEKRVSRQESQRKSIE) show a composition bias toward basic and acidic residues. Positions 37 to 79 (NTRNSFLDDSDNGTDNISIGWTPISDTQQFQSPVPQAFTFTSK) are enriched in polar residues. A compositionally biased stretch (low complexity) spans 87 to 97 (TSSSESTPKST). Over residues 176 to 194 (SPRDSSKQQAHFSDESDLR) the composition is skewed to basic and acidic residues. The 191-residue stretch at 467–657 (QRQSFIFDLI…EKLNFEVNQV (191 aa)) folds into the DH domain. A PH domain is found at 715 to 877 (KLVLSGTVYK…WIDAIMESFK (163 aa)). Positions 780–802 (TSKQPLRNYSQKEHKSPMHNFST) are disordered. The 342-residue stretch at 938-1279 (TTRILCCEDV…KLASSERREK (342 aa)) folds into the CNH domain.

As to quaternary structure, interacts with RHO1.

Functionally, guanine nucleotide-exchange factor (GEF) for RHO1 that stimulates the exchange of RHO1 GDP-bound form into GTP-bound form. Required for signaling of cell wall defects to RHO1. The sequence is that of Rho1 guanine nucleotide exchange factor TUS1 (TUS1) from Saccharomyces cerevisiae (strain ATCC 204508 / S288c) (Baker's yeast).